The sequence spans 400 residues: MGERKGVNKYYPPDFNPEKHGSLNRYHNSHPLRERARKLSQGILIIRFEMPYNIWCDGCKNHIGMGVRYNAEKKKVGNYYTTPIYRFRMKCHLCVNYIEMQTDPANCDYVIVSGAQRKEERWDMEDNEQVLTTEHEKKQKLEMDAMFRLEHGEADRSTLKKALPTLSHIQEAQSAWKDDFALNSMLRKRFREKKKAMQEEEERDQALQAKASLAIPLVPETEDDRRLAALLKFHTLDSYEDKQKLKRTEIISRSWFPSTPGASASSSSSSKTNSVLKKLAQNRRATPTSSPVTMGHLGIVRRRSREVPESPQHVAETFKSGEPQLPEGTNQNRPVSPQDCSLETAETPKNSSALGQEESCQDRPQPPPDTSPEAPNPQDTPQPCSLGSSLVADYSGSESE.

The interval 1 to 26 (MGERKGVNKYYPPDFNPEKHGSLNRY) is disordered. Ser40 is modified (phosphoserine). Residues 182 to 214 (LNSMLRKRFREKKKAMQEEEERDQALQAKASLA) adopt a coiled-coil conformation. The tract at residues 255 to 400 (WFPSTPGASA…VADYSGSESE (146 aa)) is disordered. A compositionally biased stretch (polar residues) spans 283–292 (RRATPTSSPV). At Ser310 the chain carries Phosphoserine. The segment covering 327–341 (EGTNQNRPVSPQDCS) has biased composition (polar residues). Positions 364 to 380 (PQPPPDTSPEAPNPQDT) are enriched in pro residues.

Belongs to the CWC16 family.

The protein localises to the nucleus. Its function is as follows. May be involved in mRNA splicing. This Bos taurus (Bovine) protein is Probable splicing factor YJU2B (YJU2B).